The primary structure comprises 87 residues: MANSAQARKRARQNISHRNRNMSLRSELRTAIKHVRKAIGSADKNTAQAAYQASVATIDSIADKGIIHKNKAARHKSRLSSAIKAMA.

A disordered region spans residues 1 to 25; it reads MANSAQARKRARQNISHRNRNMSLR. The segment covering 7–20 has biased composition (basic residues); sequence ARKRARQNISHRNR.

This sequence belongs to the bacterial ribosomal protein bS20 family.

In terms of biological role, binds directly to 16S ribosomal RNA. The protein is Small ribosomal subunit protein bS20 of Nitrosospira multiformis (strain ATCC 25196 / NCIMB 11849 / C 71).